Here is a 346-residue protein sequence, read N- to C-terminus: Putative serine/threonine-protein kinase K06H7.1 (346 aa).

One can recognise a Protein kinase domain in the interval 20-287 (YKVVQKLGEG…KLFKLLEDVM (268 aa)). ATP contacts are provided by residues 26 to 34 (LGEGGCGSV) and Lys50. The Proton acceptor role is filled by Asp141. The tract at residues 302 to 326 (PEKKKNPASQGNKFGLGKKGTKESG) is disordered.

Belongs to the protein kinase superfamily. Ser/Thr protein kinase family.

It catalyses the reaction L-seryl-[protein] + ATP = O-phospho-L-seryl-[protein] + ADP + H(+). It carries out the reaction L-threonyl-[protein] + ATP = O-phospho-L-threonyl-[protein] + ADP + H(+). The sequence is that of Putative serine/threonine-protein kinase K06H7.1 from Caenorhabditis elegans.